The sequence spans 164 residues: Phosphopantetheine adenylyltransferase (164 aa).

Substrate is bound at residue Ser9. Residues 9-10 (SF) and His17 each bind ATP. Positions 41, 73, and 87 each coordinate substrate. Residues 88–90 (GLR), Glu98, and 123–129 (NSFLSSS) each bind ATP.

It belongs to the bacterial CoaD family. As to quaternary structure, homohexamer. Mg(2+) is required as a cofactor.

It localises to the cytoplasm. It carries out the reaction (R)-4'-phosphopantetheine + ATP + H(+) = 3'-dephospho-CoA + diphosphate. It participates in cofactor biosynthesis; coenzyme A biosynthesis; CoA from (R)-pantothenate: step 4/5. Its function is as follows. Reversibly transfers an adenylyl group from ATP to 4'-phosphopantetheine, yielding dephospho-CoA (dPCoA) and pyrophosphate. The polypeptide is Phosphopantetheine adenylyltransferase (Clostridium kluyveri (strain ATCC 8527 / DSM 555 / NBRC 12016 / NCIMB 10680 / K1)).